Consider the following 425-residue polypeptide: Ribulose bisphosphate carboxylase (425 aa).

The active-site Proton acceptor is K153. A substrate-binding site is contributed by K155. Mg(2+) contacts are provided by K179, D181, and E182. Residue K179 is modified to N6-carboxylysine. H269 serves as the catalytic Proton acceptor. Residues R270, H302, 353-355, and 375-378 contribute to the substrate site; these read SGG and QAGG.

The protein belongs to the RuBisCO large chain family. Type III subfamily. Homodimer. In contrast to form I RuBisCO, the form III RuBisCO is composed solely of large subunits. Mg(2+) is required as a cofactor.

The enzyme catalyses 2 (2R)-3-phosphoglycerate + 2 H(+) = D-ribulose 1,5-bisphosphate + CO2 + H2O. It catalyses the reaction D-ribulose 1,5-bisphosphate + O2 = 2-phosphoglycolate + (2R)-3-phosphoglycerate + 2 H(+). With respect to regulation, reversibly inhibited by O(2). Functionally, catalyzes the addition of molecular CO(2) and H(2)O to ribulose 1,5-bisphosphate (RuBP), generating two molecules of 3-phosphoglycerate (3-PGA). Functions in an archaeal AMP degradation pathway, together with AMP phosphorylase and R15P isomerase. The protein is Ribulose bisphosphate carboxylase of Methanocaldococcus jannaschii (strain ATCC 43067 / DSM 2661 / JAL-1 / JCM 10045 / NBRC 100440) (Methanococcus jannaschii).